The chain runs to 395 residues: Acetyl-CoA acetyltransferase (395 aa).

The Acyl-thioester intermediate role is filled by C90. Y185 and K230 together coordinate CoA. Y185 lines the K(+) pocket. K(+) contacts are provided by A246, A247, and A249. S250 provides a ligand contact to CoA. V347 is a binding site for K(+). Active-site proton acceptor residues include H351 and C381.

It belongs to the thiolase-like superfamily. Thiolase family. Homotetramer.

The protein resides in the cytoplasm. It carries out the reaction 2 acetyl-CoA = acetoacetyl-CoA + CoA. The protein operates within metabolic intermediate biosynthesis; (R)-mevalonate biosynthesis; (R)-mevalonate from acetyl-CoA: step 1/3. Acetyl-CoA acetyltransferase; part of the first module of ergosterol biosynthesis pathway that includes the early steps of the pathway, conserved across all eukaryotes, and which results in the formation of mevalonate from acetyl-coenzyme A (acetyl-CoA). Erg10 catalyzes the formation of acetoacetyl-CoA from acetyl-CoA. The first module starts with the action of the cytosolic acetyl-CoA acetyltransferase eg10 that catalyzes the formation of acetoacetyl-CoA. The hydroxymethylglutaryl-CoA synthases erg13 then condenses acetyl-CoA with acetoacetyl-CoA to form HMG-CoA. The rate-limiting step of the early module is the reduction to mevalonate by the 3-hydroxy-3-methylglutaryl-coenzyme A (HMG-CoA) reductases hcs1. This is Acetyl-CoA acetyltransferase (erg10) from Schizosaccharomyces pombe (strain 972 / ATCC 24843) (Fission yeast).